The chain runs to 341 residues: tRNA N6-adenosine threonylcarbamoyltransferase (341 aa).

Fe cation contacts are provided by His-115 and His-119. Substrate is bound by residues 137-141, Asp-170, Gly-183, Asp-187, and Asn-276; that span reads AVSGG. Asp-306 provides a ligand contact to Fe cation.

This sequence belongs to the KAE1 / TsaD family. Requires Fe(2+) as cofactor.

The protein resides in the cytoplasm. The catalysed reaction is L-threonylcarbamoyladenylate + adenosine(37) in tRNA = N(6)-L-threonylcarbamoyladenosine(37) in tRNA + AMP + H(+). Required for the formation of a threonylcarbamoyl group on adenosine at position 37 (t(6)A37) in tRNAs that read codons beginning with adenine. Is involved in the transfer of the threonylcarbamoyl moiety of threonylcarbamoyl-AMP (TC-AMP) to the N6 group of A37, together with TsaE and TsaB. TsaD likely plays a direct catalytic role in this reaction. This chain is tRNA N6-adenosine threonylcarbamoyltransferase, found in Lacticaseibacillus casei (strain BL23) (Lactobacillus casei).